The following is a 98-amino-acid chain: NADH-ubiquinone oxidoreductase chain 4L (98 aa).

A run of 3 helical transmembrane segments spans residues 2 to 22 (TLVMFNITIAFTLSLLGTLMF), 26 to 46 (LMSTLLCLEGMMLCLFIMAVI), and 61 to 81 (IIILVFAACEAAVGLALLAMV).

It belongs to the complex I subunit 4L family. In terms of assembly, core subunit of respiratory chain NADH dehydrogenase (Complex I) which is composed of 45 different subunits.

It is found in the mitochondrion inner membrane. The enzyme catalyses a ubiquinone + NADH + 5 H(+)(in) = a ubiquinol + NAD(+) + 4 H(+)(out). Core subunit of the mitochondrial membrane respiratory chain NADH dehydrogenase (Complex I) which catalyzes electron transfer from NADH through the respiratory chain, using ubiquinone as an electron acceptor. Part of the enzyme membrane arm which is embedded in the lipid bilayer and involved in proton translocation. The sequence is that of NADH-ubiquinone oxidoreductase chain 4L (MT-ND4L) from Nyctomys sumichrasti (Sumichrast's vesper rat).